Consider the following 604-residue polypeptide: Crossover junction endonuclease MUS81 (604 aa).

The disordered stretch occupies residues 268 to 290; it reads SSAPSDYLDPGQKSANVASSPHR. Positions 322 to 419 constitute an ERCC4 domain; the sequence is ELYIDHREVR…HIFYLVEETS (98 aa).

The protein belongs to the XPF family. As to quaternary structure, interacts with EME1. The cofactor is Mg(2+).

Its subcellular location is the nucleus. Interacts with EME1 to form a DNA structure-specific endonuclease with substrate preference for branched DNA structures with a 5'-end at the branch nick. Typical substrates include 3'-flap structures, D-loops, replication forks and nicked Holliday junctions. May be required in mitosis for the processing of stalled or collapsed replication fork intermediates. May be required in meiosis for the repair of meiosis-specific double strand breaks subsequent to single-end invasion (SEI). This Eremothecium gossypii (strain ATCC 10895 / CBS 109.51 / FGSC 9923 / NRRL Y-1056) (Yeast) protein is Crossover junction endonuclease MUS81 (MUS81).